Here is a 95-residue protein sequence, read N- to C-terminus: MTLSLNDIKRVAKLARIEISETDAQQNLVRLSGIFDLIEQMRAVDTQGIKPMSHSQDMVQRLREDIVTESDQRTLFQSVAPQIEDGYYLVPKVIE.

This sequence belongs to the GatC family. As to quaternary structure, heterotrimer of A, B and C subunits.

It catalyses the reaction L-glutamyl-tRNA(Gln) + L-glutamine + ATP + H2O = L-glutaminyl-tRNA(Gln) + L-glutamate + ADP + phosphate + H(+). The enzyme catalyses L-aspartyl-tRNA(Asn) + L-glutamine + ATP + H2O = L-asparaginyl-tRNA(Asn) + L-glutamate + ADP + phosphate + 2 H(+). Functionally, allows the formation of correctly charged Asn-tRNA(Asn) or Gln-tRNA(Gln) through the transamidation of misacylated Asp-tRNA(Asn) or Glu-tRNA(Gln) in organisms which lack either or both of asparaginyl-tRNA or glutaminyl-tRNA synthetases. The reaction takes place in the presence of glutamine and ATP through an activated phospho-Asp-tRNA(Asn) or phospho-Glu-tRNA(Gln). This is Aspartyl/glutamyl-tRNA(Asn/Gln) amidotransferase subunit C from Nitrosomonas europaea (strain ATCC 19718 / CIP 103999 / KCTC 2705 / NBRC 14298).